Here is a 488-residue protein sequence, read N- to C-terminus: (S)-N-methylcoclaurine 3'-hydroxylase isozyme 2 (488 aa).

A helical transmembrane segment spans residues 3–23 (VVTVALIAVIISSILYLLFGS). Residue Cys430 coordinates heme.

Belongs to the cytochrome P450 family. Requires heme as cofactor.

The protein resides in the endoplasmic reticulum membrane. The protein localises to the microsome membrane. The enzyme catalyses (S)-N-methylcoclaurine + reduced [NADPH--hemoprotein reductase] + O2 = (S)-3'-hydroxy-N-methylcoclaurine + oxidized [NADPH--hemoprotein reductase] + H2O + H(+). It participates in alkaloid biosynthesis; (S)-reticuline biosynthesis; (S)-reticuline from (S)-norcoclaurine: step 3/4. In terms of biological role, 3'-hydroxylation of (S)-N-methylcoclaurine. This is (S)-N-methylcoclaurine 3'-hydroxylase isozyme 2 (CYP80B2) from Eschscholzia californica (California poppy).